The following is a 459-amino-acid chain: Vacuolar fusion protein CCZ1 homolog (459 aa).

It belongs to the CCZ1 family.

This Nematostella vectensis (Starlet sea anemone) protein is Vacuolar fusion protein CCZ1 homolog.